The chain runs to 342 residues: Spore photoproduct lyase (342 aa).

The Radical SAM core domain occupies 77 to 305; that stretch reads SKPSAEYAIP…EEKRRYKWGR (229 aa). The [4Fe-4S] cluster site is built by cysteine 91, cysteine 95, and cysteine 98. The H-T-H motif DNA-binding region spans 218 to 235; the sequence is EAAVKVAKAGYPLGFIVA.

This sequence belongs to the radical SAM superfamily. SPL family. In terms of assembly, monomer or homodimer. Requires [4Fe-4S] cluster as cofactor. S-adenosyl-L-methionine is required as a cofactor.

It carries out the reaction (5R)-5,6-dihydro-5-(thymidin-7-yl)thymidine in DNA = a thymidine dimer in DNA. Involved in repair of UV radiation-induced DNA damage during spore germination. Can repair thymine dimer 5-thyminyl-5,6-dihydrothymine (known as spore photoproduct (SP)) by in situ monomerization of SP to two thymines. This Bacillus subtilis (strain 168) protein is Spore photoproduct lyase (splB).